A 374-amino-acid chain; its full sequence is Queuine tRNA-ribosyltransferase (374 aa).

Asp90 (proton acceptor) is an active-site residue. Residues Asp90–Phe94, Asp144, Gln193, and Gly220 each bind substrate. Residues Gly251 to Asp257 form an RNA binding region. Asp270 acts as the Nucleophile in catalysis. The interval Thr275 to Arg279 is RNA binding; important for wobble base 34 recognition. 4 residues coordinate Zn(2+): Cys308, Cys310, Cys313, and His339.

Belongs to the queuine tRNA-ribosyltransferase family. In terms of assembly, homodimer. Within each dimer, one monomer is responsible for RNA recognition and catalysis, while the other monomer binds to the replacement base PreQ1. The cofactor is Zn(2+).

The catalysed reaction is 7-aminomethyl-7-carbaguanine + guanosine(34) in tRNA = 7-aminomethyl-7-carbaguanosine(34) in tRNA + guanine. Its pathway is tRNA modification; tRNA-queuosine biosynthesis. Functionally, catalyzes the base-exchange of a guanine (G) residue with the queuine precursor 7-aminomethyl-7-deazaguanine (PreQ1) at position 34 (anticodon wobble position) in tRNAs with GU(N) anticodons (tRNA-Asp, -Asn, -His and -Tyr). Catalysis occurs through a double-displacement mechanism. The nucleophile active site attacks the C1' of nucleotide 34 to detach the guanine base from the RNA, forming a covalent enzyme-RNA intermediate. The proton acceptor active site deprotonates the incoming PreQ1, allowing a nucleophilic attack on the C1' of the ribose to form the product. After dissociation, two additional enzymatic reactions on the tRNA convert PreQ1 to queuine (Q), resulting in the hypermodified nucleoside queuosine (7-(((4,5-cis-dihydroxy-2-cyclopenten-1-yl)amino)methyl)-7-deazaguanosine). The polypeptide is Queuine tRNA-ribosyltransferase (Campylobacter fetus subsp. fetus (strain 82-40)).